A 503-amino-acid chain; its full sequence is Glycerol kinase (503 aa).

Thr14 is a binding site for ADP. Residues Thr14, Thr15, and Ser16 each contribute to the ATP site. Thr14 contacts sn-glycerol 3-phosphate. Position 18 (Arg18) interacts with ADP. Positions 84, 85, 136, and 246 each coordinate sn-glycerol 3-phosphate. Arg84, Glu85, Tyr136, Asp246, and Gln247 together coordinate glycerol. Thr268 and Gly311 together coordinate ADP. Positions 268, 311, 315, and 412 each coordinate ATP. Residues Gly412 and Asn416 each coordinate ADP.

Belongs to the FGGY kinase family. Homotetramer and homodimer (in equilibrium). Heterodimer with EIIA-Glc. Binds 1 zinc ion per glycerol kinase EIIA-Glc dimer. The zinc ion is important for dimerization.

It catalyses the reaction glycerol + ATP = sn-glycerol 3-phosphate + ADP + H(+). It participates in polyol metabolism; glycerol degradation via glycerol kinase pathway; sn-glycerol 3-phosphate from glycerol: step 1/1. Activity of this regulatory enzyme is affected by several metabolites. Allosterically and non-competitively inhibited by fructose 1,6-bisphosphate (FBP) and unphosphorylated phosphocarrier protein EIIA-Glc (III-Glc), an integral component of the bacterial phosphotransferase (PTS) system. Its function is as follows. Key enzyme in the regulation of glycerol uptake and metabolism. Catalyzes the phosphorylation of glycerol to yield sn-glycerol 3-phosphate. This Klebsiella pneumoniae subsp. pneumoniae (strain ATCC 700721 / MGH 78578) protein is Glycerol kinase.